An 859-amino-acid chain; its full sequence is Protein EFR3 homolog (859 aa).

Disordered regions lie at residues 638–657 (DDPLSSTAVNGTIPEGTPRT) and 697–724 (RDGNGDSWQREDGQNFDSTDGRESPDGY). Over residues 704–722 (WQREDGQNFDSTDGRESPD) the composition is skewed to basic and acidic residues.

This sequence belongs to the EFR3 family.

This chain is Protein EFR3 homolog, found in Caenorhabditis briggsae.